The following is a 211-amino-acid chain: Transcriptional regulatory protein RcsA (211 aa).

The region spanning 135–200 (LDVHPLTLSQ…VIYHVVRLTD (66 aa)) is the HTH luxR-type domain. Positions 159–178 (TIQISDKMQIKAKTVSSHKG) form a DNA-binding region, H-T-H motif.

This sequence belongs to the RcsA family.

Its function is as follows. Component of the Rcs signaling system, which controls transcription of numerous genes. Binds to DNA to regulate expression of genes. This Pantoea stewartii subsp. stewartii (Erwinia stewartii) protein is Transcriptional regulatory protein RcsA.